A 986-amino-acid chain; its full sequence is Translation initiation factor IF-2 (986 aa).

The segment at T95–T394 is disordered. Positions E122–A182 are enriched in basic and acidic residues. The span at A183 to Q222 shows a compositional bias: low complexity. Over residues E228 to R277 the composition is skewed to basic and acidic residues. Residues A320–A342 show a composition bias toward low complexity. Over residues T371–K384 the composition is skewed to gly residues. In terms of domain architecture, tr-type G spans P486–K655. The tract at residues G495–T502 is G1. G495 to T502 serves as a coordination point for GTP. The G2 stretch occupies residues G520–H524. Positions D541–G544 are G3. GTP is bound by residues D541–H545 and N595–D598. Residues N595–D598 form a G4 region. Residues S631–K633 form a G5 region.

The protein belongs to the TRAFAC class translation factor GTPase superfamily. Classic translation factor GTPase family. IF-2 subfamily.

The protein localises to the cytoplasm. One of the essential components for the initiation of protein synthesis. Protects formylmethionyl-tRNA from spontaneous hydrolysis and promotes its binding to the 30S ribosomal subunits. Also involved in the hydrolysis of GTP during the formation of the 70S ribosomal complex. The sequence is that of Translation initiation factor IF-2 from Paraburkholderia phytofirmans (strain DSM 17436 / LMG 22146 / PsJN) (Burkholderia phytofirmans).